Here is a 399-residue protein sequence, read N- to C-terminus: MKPYDLPDAQGHFGQYGGVFVAETLIHALDELRAAYDHCRLDPKFIETFNYELKHFVGRPSPVYHAARWSRELGGAQIWFKREDLNHTGAHKVNNCIGQALLARHMGKPRVIAETGAGQHGVATATVAARYGMECVVYMGSEDVRRQASNVYRMKLLGATVVPVESGSRTLKDALNEAMRDWVTNIENTFYIIGTVAGPDPYPRMVRDFQTVIGNECLEQMPQDAGRQPDYVVASVGGGSNAMGIFYPYIPHENVRLIGVEAAGEGLDSGRHAASLAAGQVGVLHGNRTYVMQNADGQVQETHSVSAGLDYPGVGPEHAWLKDSGRAQYVGITDDEALAAFHDCCRIEGIMPALESSHAIAQAVKMAPTLPKDTIILVNLSGRGDKDMHTVAERAGIQF.

An N6-(pyridoxal phosphate)lysine modification is found at Lys-92.

Belongs to the TrpB family. In terms of assembly, tetramer of two alpha and two beta chains. Pyridoxal 5'-phosphate is required as a cofactor.

It carries out the reaction (1S,2R)-1-C-(indol-3-yl)glycerol 3-phosphate + L-serine = D-glyceraldehyde 3-phosphate + L-tryptophan + H2O. It participates in amino-acid biosynthesis; L-tryptophan biosynthesis; L-tryptophan from chorismate: step 5/5. Its function is as follows. The beta subunit is responsible for the synthesis of L-tryptophan from indole and L-serine. The polypeptide is Tryptophan synthase beta chain (Bordetella petrii (strain ATCC BAA-461 / DSM 12804 / CCUG 43448)).